Consider the following 199-residue polypeptide: Elongation factor Ts (199 aa).

The tract at residues 82-85 (TDFV) is involved in Mg(2+) ion dislocation from EF-Tu.

It belongs to the EF-Ts family.

It localises to the cytoplasm. Associates with the EF-Tu.GDP complex and induces the exchange of GDP to GTP. It remains bound to the aminoacyl-tRNA.EF-Tu.GTP complex up to the GTP hydrolysis stage on the ribosome. The chain is Elongation factor Ts from Leptospira borgpetersenii serovar Hardjo-bovis (strain JB197).